Consider the following 177-residue polypeptide: Putative fimbrin-like protein FimI (177 aa).

An N-terminal signal peptide occupies residues 1-19; the sequence is MIRKGAALVGLVLMSPVIA. A disulfide bridge connects residues Cys-40 and Cys-81.

It belongs to the fimbrial protein family.

The protein resides in the fimbrium. In Salmonella typhi, this protein is Putative fimbrin-like protein FimI (fimI).